Here is a 672-residue protein sequence, read N- to C-terminus: 2,4-dienoyl-CoA reductase [(2E)-enoyl-CoA-producing] (672 aa).

FMN contacts are provided by residues Ser25 to His27, Gly59, and Gln101. The active-site Proton donor is the Tyr167. Arg176 contacts substrate. Position 215 (Arg215) interacts with FMN. His253–Arg256 contributes to the substrate binding site. FMN is bound by residues Arg289 and Ala311–Arg312. Positions 335 and 338 each coordinate [4Fe-4S] cluster. Gln340 serves as a coordination point for FAD. Gln340 contacts NADP(+). 2 residues coordinate [4Fe-4S] cluster: Cys342 and Cys354. FAD-binding residues include Ala385, Asp404, Gln412, Lys422, and Val449. Residue Arg563–Lys564 participates in NADP(+) binding. The substrate site is built by Lys567 and Trp578. Residues Gly649 and Leu656–Ala658 each bind FAD. Met654 to Leu656 contributes to the NADP(+) binding site.

In the N-terminal section; belongs to the NADH:flavin oxidoreductase/NADH oxidase family. As to quaternary structure, monomer. The cofactor is FMN. It depends on FAD as a cofactor. Requires [4Fe-4S] cluster as cofactor.

The enzyme catalyses a 4,5-saturated-(2E)-enoyl-CoA + NADP(+) = a (2E,4E)-dienoyl-CoA + NADPH + H(+). It catalyses the reaction a (2E,4Z)-dienoyl-CoA + NADPH + H(+) = a 4,5-saturated-(2E)-enoyl-CoA + NADP(+). It carries out the reaction (2E)-decenoyl-CoA + NADP(+) = (2E,4E)-decadienoyl-CoA + NADPH + H(+). The catalysed reaction is (2E)-decenoyl-CoA + NADP(+) = (2E,4Z)-decadienoyl-CoA + NADPH + H(+). Its pathway is lipid metabolism; fatty acid beta-oxidation. With respect to regulation, is non-competitively inhibited by NADH. Functions as an auxiliary enzyme in the beta-oxidation of unsaturated fatty acids with double bonds at even carbon positions. Catalyzes the NADPH-dependent reduction of the C4-C5 double bond of the acyl chain of 2,4-dienoyl-CoA to yield 2-trans-enoyl-CoA. Acts on both isomers, 2-trans,4-cis- and 2-trans,4-trans-decadienoyl-CoA, with almost equal efficiency. Is not active with NADH instead of NADPH. Does not show cis-&gt;trans isomerase activity. The polypeptide is 2,4-dienoyl-CoA reductase [(2E)-enoyl-CoA-producing] (Escherichia coli (strain K12)).